Reading from the N-terminus, the 919-residue chain is GPI ethanolamine phosphate transferase 1 (919 aa).

Residues 1–9 (MWNKTRTTL) are Cytoplasmic-facing. Residues 10–30 (LAVGVLFHLFYLWSIFDIYFI) traverse the membrane as a helical segment. The Lumenal portion of the chain corresponds to 31 to 457 (SPLVHGMSPY…TTYNWRFIRT (427 aa)). N-linked (GlcNAc...) asparagine glycosylation is found at Asn-90, Asn-138, Asn-198, Asn-202, Asn-286, and Asn-312. The helical transmembrane segment at 458–478 (IVTFGFVGWIFFSFIIFLKSF) threads the bilayer. Topologically, residues 479–488 (ILENVIDDQK) are cytoplasmic. The helical transmembrane segment at 489–509 (ASPLSHAVFGSIGILLNWILF) threads the bilayer. Over 510 to 512 (YQH) the chain is Lumenal. A helical membrane pass occupies residues 513 to 533 (SPFNFYMYLLFPLYFWSYIFT). At 534-553 (NRSVLRSGIKEFFKGTSPWK) the chain is on the cytoplasmic side. Residues 554 to 574 (RVLITISIISVYEGIVYGFFH) traverse the membrane as a helical segment. The Lumenal portion of the chain corresponds to 575 to 576 (RW). Residues 577 to 597 (TFTLITNILAFYPFICGVREL) form a helical membrane-spanning segment. Ser-598 is a topological domain (cytoplasmic). The helical transmembrane segment at 599 to 619 (VNILWIITSVLLSTFTLFDAV) threads the bilayer. Residues 620–626 (KIEDLNQ) lie on the Lumenal side of the membrane. Residues 627 to 647 (IHLAGLLIILSAFYALYKIHS) form a helical membrane-spanning segment. Over 648–655 (RINSYTRA) the chain is Cytoplasmic. A helical membrane pass occupies residues 656-676 (IFAIQISLVAAMLAVTHRSVI). The Lumenal segment spans residues 677-687 (SLQLRQGLPRE). Residues 688-708 (SQVAGWIIFFVSLFVMPILHY) form a helical membrane-spanning segment. Over 709 to 720 (RKPNNDYKVRLL) the chain is Cytoplasmic. Residues 721–741 (IIYLTFAPSFIILTISFESLF) traverse the membrane as a helical segment. Residues 742-776 (YFLFTSYMVQWIEIENKIKEMKTQKDENWLQVLRV) are Lumenal-facing. The chain crosses the membrane as a helical span at residues 777 to 797 (SVIGFFLLQVAFFGTGNVASI). Residues 798 to 807 (SSFSLESVCR) are Cytoplasmic-facing. Residues 808-828 (LLPIFDPFLMGALLMLKLIIP) traverse the membrane as a helical segment. Residues 829–848 (YGLLSTCLGILNLKLNFKDY) lie on the Lumenal side of the membrane. Residues 849-869 (TISSLIISMSDILSLNFFYLL) form a helical membrane-spanning segment. At 870–885 (RTEGSWLDIGITISNY) the chain is on the cytoplasmic side. Residues 886–906 (CLAILSSLFMLILEVLGHVLL) traverse the membrane as a helical segment. The Lumenal portion of the chain corresponds to 907–919 (KNVIIQDKTKKTQ).

It belongs to the PIGG/PIGN/PIGO family. PIGN subfamily. Interacts with CSF1; CSF1 channels phosphatidylethanolamine to MCD4 in the endoplasmic reticulum at contact sites to support GPI anchor biosynthesis. In terms of processing, N-glycosylated.

It localises to the endoplasmic reticulum membrane. The protein localises to the golgi apparatus membrane. The protein resides in the vacuole membrane. The protein operates within glycolipid biosynthesis; glycosylphosphatidylinositol-anchor biosynthesis. Its function is as follows. Ethanolamine phosphate transferase involved in glycosylphosphatidylinositol-anchor biosynthesis. Transfers ethanolamine phosphate to the first alpha-1,4-linked mannose of the glycosylphosphatidylinositol precursor of GPI-anchor. Ethanolamine phosphate on the alpha-1,4-linked mannose is essential for further mannosylation by GPI10 and is necessary for an efficient recognition of GPI lipids and GPI proteins by the GPI transamidase, for the efficient transport of GPI anchored proteins from endoplasmic reticulum to Golgi and for the physiological incorporation of ceramides into GPI anchors by lipid remodeling. Also involved in non-mitochondrial ATP movements across membrane and participates in Golgi and endoplasmic reticulum function, Also required for the incorporation of BGL2 into the cell wall. In Saccharomyces cerevisiae (strain ATCC 204508 / S288c) (Baker's yeast), this protein is GPI ethanolamine phosphate transferase 1 (MCD4).